The following is a 207-amino-acid chain: MATIDVFDISKNKVGVMDLNDNVFNGEVKEYLIHEAIKVQLANRRAGTVSVKNRAIVSGGGKKPYRQKGTGQARQGCIRAPHFVGGGVAFGPRPKVYNLSMNKKARKAAVRSALSMLYKENKLSVLDSFTLPSISTKGFVTVLKAFDLAKTLVVVDEPNLNLELSARNVKDVKVLKAEHLNVFDIVKYNNIIVTQSAVRTIEGVLQS.

The protein belongs to the universal ribosomal protein uL4 family. In terms of assembly, part of the 50S ribosomal subunit.

Functionally, one of the primary rRNA binding proteins, this protein initially binds near the 5'-end of the 23S rRNA. It is important during the early stages of 50S assembly. It makes multiple contacts with different domains of the 23S rRNA in the assembled 50S subunit and ribosome. Forms part of the polypeptide exit tunnel. This Geobacter sulfurreducens (strain ATCC 51573 / DSM 12127 / PCA) protein is Large ribosomal subunit protein uL4.